We begin with the raw amino-acid sequence, 122 residues long: Large ribosomal subunit protein uL14 (122 aa).

Belongs to the universal ribosomal protein uL14 family. Part of the 50S ribosomal subunit. Forms a cluster with proteins L3 and L19. In the 70S ribosome, L14 and L19 interact and together make contacts with the 16S rRNA in bridges B5 and B8.

Its function is as follows. Binds to 23S rRNA. Forms part of two intersubunit bridges in the 70S ribosome. This Chloroherpeton thalassium (strain ATCC 35110 / GB-78) protein is Large ribosomal subunit protein uL14.